A 362-amino-acid polypeptide reads, in one-letter code: Peptide chain release factor 1 (362 aa).

Gln237 carries the N5-methylglutamine modification. Positions 282 to 296 are enriched in basic and acidic residues; it reads QQEEDKRRAEADSTR. Residues 282–304 are disordered; the sequence is QQEEDKRRAEADSTRRSILSTGD.

The protein belongs to the prokaryotic/mitochondrial release factor family. In terms of processing, methylated by PrmC. Methylation increases the termination efficiency of RF1.

It localises to the cytoplasm. Its function is as follows. Peptide chain release factor 1 directs the termination of translation in response to the peptide chain termination codons UAG and UAA. This Tolumonas auensis (strain DSM 9187 / NBRC 110442 / TA 4) protein is Peptide chain release factor 1.